The sequence spans 372 residues: Cytochrome b (372 aa).

The next 4 membrane-spanning stretches (helical) occupy residues 25–45, 69–90, 105–125, and 170–190; these read FGSMLLTCLILQIMTGFFLAI, WIMQNLHAIGASLFFICIYIHI, WLSGTTLLIILMATAFFGYVL, and FFALHFILPFTIISLSSIHII. Positions 75 and 89 each coordinate heme b. Residues H174 and H188 each contribute to the heme b site. H193 is a binding site for a ubiquinone. Transmembrane regions (helical) follow at residues 218 to 238, 280 to 300, 312 to 332, and 339 to 358; these read YKDMLMIIIMTAILFLILSFS, LGGTLALVMSVMILTTAPFTH, LSQIVFWTLIATFITITWTAT, and FISISQTASIFYFSFFIMNP.

This sequence belongs to the cytochrome b family. In terms of assembly, the cytochrome bc1 complex contains 3 respiratory subunits (MT-CYB, CYC1 and UQCRFS1), 2 core proteins (UQCRC1 and UQCRC2) and probably 6 low-molecular weight proteins. Heme b is required as a cofactor.

Its subcellular location is the mitochondrion inner membrane. Its function is as follows. Component of the ubiquinol-cytochrome c reductase complex (complex III or cytochrome b-c1 complex) that is part of the mitochondrial respiratory chain. The b-c1 complex mediates electron transfer from ubiquinol to cytochrome c. Contributes to the generation of a proton gradient across the mitochondrial membrane that is then used for ATP synthesis. This is Cytochrome b (MT-CYB) from Walterinnesia aegyptia (Desert black snake).